We begin with the raw amino-acid sequence, 469 residues long: Protein DETOXIFICATION 18 (469 aa).

12 consecutive transmembrane segments (helical) span residues 40-60, 73-93, 121-141, 152-172, 183-203, 206-226, 252-274, 293-313, 344-364, 374-394, 406-426, and 438-458; these read LPMIFTNLFYYCIPLTSVMFA, LANSWATVTGFAFMTGLSGAL, LVFTILITILWFFTESVFLLL, ALYMKYLAPGLLAYGFLQNIL, PLVLFSFLPLVINIGTTYALV, AGLGFIGAPIATSISLWIAFV, HVVLNLTLSIPSAAMVCLEYWAF, LVAICVNTESISYMLTCGLSA, VLALGVVIAILVGHDAWVGLF, FASLRFFLAASITLDSIQGVL, LATVINLGTFYLIGMPISVLC, and WIGLICGMFCQSASLLLMTIF.

The protein belongs to the multi antimicrobial extrusion (MATE) (TC 2.A.66.1) family.

It is found in the membrane. In Arabidopsis thaliana (Mouse-ear cress), this protein is Protein DETOXIFICATION 18.